The following is a 45-amino-acid chain: Photosystem II reaction center protein K (45 aa).

The propeptide occupies 1-8 (MEAVLLLA). The chain crosses the membrane as a helical span at residues 24-44 (MPVIPLFFLALAFVWQAAVGF).

It belongs to the PsbK family. PSII is composed of 1 copy each of membrane proteins PsbA, PsbB, PsbC, PsbD, PsbE, PsbF, PsbH, PsbI, PsbJ, PsbK, PsbL, PsbM, PsbT, PsbX, PsbY, PsbZ, Psb30/Ycf12, peripheral proteins PsbO, CyanoQ (PsbQ), PsbU, PsbV and a large number of cofactors. It forms dimeric complexes.

The protein localises to the cellular thylakoid membrane. In terms of biological role, one of the components of the core complex of photosystem II (PSII). PSII is a light-driven water:plastoquinone oxidoreductase that uses light energy to abstract electrons from H(2)O, generating O(2) and a proton gradient subsequently used for ATP formation. It consists of a core antenna complex that captures photons, and an electron transfer chain that converts photonic excitation into a charge separation. The polypeptide is Photosystem II reaction center protein K (Acaryochloris marina (strain MBIC 11017)).